The primary structure comprises 417 residues: Tyrosine--tRNA ligase (417 aa).

L-tyrosine is bound at residue tyrosine 39. A 'HIGH' region motif is present at residues 44–53; sequence PTAASLHAGG. L-tyrosine contacts are provided by tyrosine 176 and glutamine 180. Residues 236-240 carry the 'KMSKS' region motif; sequence KMGKS. Lysine 239 provides a ligand contact to ATP. An S4 RNA-binding domain is found at 350 to 417; it reads LGLLTLLVRA…KKKHLLVRPV (68 aa).

It belongs to the class-I aminoacyl-tRNA synthetase family. TyrS type 1 subfamily. In terms of assembly, homodimer.

It is found in the cytoplasm. It catalyses the reaction tRNA(Tyr) + L-tyrosine + ATP = L-tyrosyl-tRNA(Tyr) + AMP + diphosphate + H(+). Catalyzes the attachment of tyrosine to tRNA(Tyr) in a two-step reaction: tyrosine is first activated by ATP to form Tyr-AMP and then transferred to the acceptor end of tRNA(Tyr). This is Tyrosine--tRNA ligase from Rhizobium meliloti (strain 1021) (Ensifer meliloti).